The primary structure comprises 500 residues: MSNMQQKTDVILIGAGIMSATLGSLLKELAPEWEIKVFEKLASAGEESSNEWNNAGTGHSALCELNYTSEKSDGSIDISKAVKVNEQFQLSRQFWAYLVKSKLIRNPQDFIMPLPHMSLVQGEKNVQFLKNRFEALSKNPLFQGMEFSDAPETLKKWLPLIMEGRTSNEPMAATKIDSGTDVNFGALTRMLFDYLKTKDVELNYKHSVENIKRTKNGLWEVKVHDMNSGKIEHHTAKFVFIGGGGGSLPLLQKTGIPESKHIGGFPVSGLFMVCKNQKVVEQHHAKVYGKAKVGAPPMSVPHLDTRYIDNKKALLFGPFAGFSPKFLKTGSNLDLIGSVKPNNVLTMLAAGVKEMGLTKYLIQQVMLSHEKRMEELREFIPNAKSEDWDIVVAGQRVQVIKDTDAGGKGTLQFGTEVVSAADGSIAALLGASPGASTAVHVMLEVLEKCFPSRMVEWEGKIKEMIPSYGISLTENPRLFQDLHTSTGRTLGLNEKETVHN.

Belongs to the MQO family. FAD is required as a cofactor.

It carries out the reaction (S)-malate + a quinone = a quinol + oxaloacetate. It participates in carbohydrate metabolism; tricarboxylic acid cycle; oxaloacetate from (S)-malate (quinone route): step 1/1. In Bacillus cereus (strain ATCC 10987 / NRS 248), this protein is Probable malate:quinone oxidoreductase.